An 821-amino-acid polypeptide reads, in one-letter code: Leucine--tRNA ligase (821 aa).

Residues 40-50 carry the 'HIGH' region motif; sequence PYPSGRIHMGH. The 'KMSKS' region signature appears at 586 to 590; sequence KMSKS. Lysine 589 serves as a coordination point for ATP.

Belongs to the class-I aminoacyl-tRNA synthetase family.

It is found in the cytoplasm. The catalysed reaction is tRNA(Leu) + L-leucine + ATP = L-leucyl-tRNA(Leu) + AMP + diphosphate. The polypeptide is Leucine--tRNA ligase (Aliarcobacter butzleri (strain RM4018) (Arcobacter butzleri)).